Consider the following 115-residue polypeptide: Large ribosomal subunit protein bL20c (115 aa).

This sequence belongs to the bacterial ribosomal protein bL20 family.

It localises to the plastid. It is found in the chloroplast. In terms of biological role, binds directly to 23S ribosomal RNA and is necessary for the in vitro assembly process of the 50S ribosomal subunit. It is not involved in the protein synthesizing functions of that subunit. This chain is Large ribosomal subunit protein bL20c, found in Chlorokybus atmophyticus (Soil alga).